The sequence spans 243 residues: Transcription factor TFIIS homolog (243 aa).

A TFIIS central domain is found at 77–201 (MRDIIQMMFF…SQQKVAEKTS (125 aa)). Residues 202-242 (QLYKCPNCKQRMCTYREVQTRALDEPSTIFCTCKKCGHEFI) form a TFIIS-type zinc finger. Cys-206, Cys-209, Cys-234, and Cys-237 together coordinate Zn(2+).

The protein belongs to the TFS-II family.

Functionally, putative initiation factor. Necessary for efficient transcription elongation past template-encoded arresting sites. This is Transcription factor TFIIS homolog from Ornithodoros (relapsing fever ticks).